We begin with the raw amino-acid sequence, 142 residues long: SLSDKDKAAVRALWSTISKSSDAIGNDALSRMIVVYPQTKIYFSHWPEVIPGSIHIKEHGKKVMGGIELAVSKIDDLKTGLFELSEQHAFKLRVDPGNFKILNHCILVVIATMFPKEFTPEAHVSLDKFLSGVALALAERYR.

N-acetylserine is present on Ser1. The Globin domain occupies 1–142 (SLSDKDKAAV…VALALAERYR (142 aa)). Position 59 (His59) interacts with O2. Position 88 (His88) interacts with heme b.

It belongs to the globin family. In terms of assembly, heterotetramer of two alpha chains and two beta chains. Red blood cells.

Its function is as follows. Involved in oxygen transport from gills to the various peripheral tissues. This chain is Hemoglobin subunit alpha (hba), found in Gymnodraco acuticeps (Antarctic dragonfish).